The primary structure comprises 213 residues: Superoxide dismutase [Mn] (213 aa).

His-27, His-82, Asp-168, and His-172 together coordinate Mn(2+).

This sequence belongs to the iron/manganese superoxide dismutase family. Homodimer. The cofactor is Mn(2+).

It catalyses the reaction 2 superoxide + 2 H(+) = H2O2 + O2. In terms of biological role, destroys superoxide anion radicals which are normally produced within the cells and which are toxic to biological systems. This is Superoxide dismutase [Mn] (sodA) from Mannheimia haemolytica (Pasteurella haemolytica).